Here is a 172-residue protein sequence, read N- to C-terminus: Disulfide bond formation protein B (172 aa).

Over 1–13 (MNWLAQLPTQRTP) the chain is Cytoplasmic. Residues 14–30 (WLLFSGIVFLLEITALF) form a helical membrane-spanning segment. Residues 31–48 (FQYKMGLAPCIMCIYQRT) lie on the Periplasmic side of the membrane. Cys40 and Cys43 are disulfide-bonded. Residues 49–64 (AVLGLLIAGIIGTSNP) traverse the membrane as a helical segment. At 65 to 71 (EHRGVRL) the chain is on the cytoplasmic side. The chain crosses the membrane as a helical span at residues 72–89 (LAYSVWAVSSVWGFIIAR). The Periplasmic portion of the chain corresponds to 90 to 145 (EHIEMQTTTDPFAFSCEFEPNFPAFMPLHEWIPSFFAATGDCGNIDWQFAGLSMPA). Cys105 and Cys131 are joined by a disulfide. The helical transmembrane segment at 146-164 (WMEVIFALFAATLFLLVTS) threads the bilayer. Over 165–172 (RLMTKRSL) the chain is Cytoplasmic.

It belongs to the DsbB family.

The protein localises to the cell inner membrane. Its function is as follows. Required for disulfide bond formation in some periplasmic proteins. Acts by oxidizing the DsbA protein. This is Disulfide bond formation protein B from Pseudoalteromonas translucida (strain TAC 125).